A 310-amino-acid polypeptide reads, in one-letter code: Fucose-specific lectin (310 aa).

A run of 6 repeats spans residues 1 to 53, 54 to 103, 104 to 151, 152 to 209, 210 to 256, and 257 to 310. Positions 1 to 310 are 6 X approximate tandem repeats; that stretch reads MSTPGAQEVL…LGRRALPPAE (310 aa). Residues Arg25, Glu37, Trp44, Arg73, Glu85, Trp94, Arg126, Glu138, Trp146, Arg177, Gln189, Trp198, Arg230, Gln242, Arg277, and Glu291 each contribute to the beta-L-fucose site.

Belongs to the fungal fucose-specific lectin family.

In terms of biological role, lectin that specifically binds to L-fucose and weakly reacts with mannose and N-acetyl-neuraminic acid. Has strongest preference for the alpha-1,6-fucosylated chain (core fucose) on glycoproteins among alpha-1,2-, alpha-1,3-, alpha-1,4-, and alpha-1,6-fucosylated chains. Binds to fucose residues of IgE in mice and human, causing antigen-independent IgE-mediated mast cell activation and anaphylactoid reactions in mice and is possibly implicated in allergic response to Aspergillus oryzae in humans. Induces secretion of pro-inflammatory cytokines IL6 and IL8 implicated in ocular diseases such as mycotic keratitis, probably through its interaction with host toll-like receptors TLR2 and TLR4, followed by up-regulation of pro-inflammatory cytokines. The protein is Fucose-specific lectin of Aspergillus oryzae (Yellow koji mold).